A 266-amino-acid chain; its full sequence is Glucosamine-6-phosphate deaminase (266 aa).

Residue aspartate 72 is the Proton acceptor; for enolization step of the active site. Residue aspartate 141 is the For ring-opening step of the active site. Catalysis depends on histidine 143, which acts as the Proton acceptor; for ring-opening step. Glutamate 148 acts as the For ring-opening step in catalysis.

The protein belongs to the glucosamine/galactosamine-6-phosphate isomerase family. NagB subfamily. In terms of assembly, homohexamer.

The catalysed reaction is alpha-D-glucosamine 6-phosphate + H2O = beta-D-fructose 6-phosphate + NH4(+). It participates in amino-sugar metabolism; N-acetylneuraminate degradation; D-fructose 6-phosphate from N-acetylneuraminate: step 5/5. Allosterically activated by N-acetylglucosamine 6-phosphate (GlcNAc6P). Functionally, catalyzes the reversible isomerization-deamination of glucosamine 6-phosphate (GlcN6P) to form fructose 6-phosphate (Fru6P) and ammonium ion. This chain is Glucosamine-6-phosphate deaminase, found in Vibrio vulnificus (strain CMCP6).